Consider the following 119-residue polypeptide: UPF0102 protein SGR_1878 (119 aa).

It belongs to the UPF0102 family.

The polypeptide is UPF0102 protein SGR_1878 (Streptomyces griseus subsp. griseus (strain JCM 4626 / CBS 651.72 / NBRC 13350 / KCC S-0626 / ISP 5235)).